A 196-amino-acid polypeptide reads, in one-letter code: Putative acetyltransferase YJL218W (196 aa).

Asn-84 lines the acetyl-CoA pocket. His-114 serves as the catalytic Proton donor/acceptor. Acetyl-CoA-binding positions include Gly-141, Ala-159, 164 to 165 (IR), Lys-179, and Arg-182.

Belongs to the transferase hexapeptide repeat family. In terms of assembly, homodimer.

In Saccharomyces cerevisiae (strain ATCC 204508 / S288c) (Baker's yeast), this protein is Putative acetyltransferase YJL218W.